An 83-amino-acid chain; its full sequence is Ardiscretin (83 aa).

An N-terminal signal peptide occupies residues 1–20; it reads MKGMIMLISCLMLIDVVVES. Residues 21–82 form the LCN-type CS-alpha/beta domain; the sequence is KNGYIIEPKG…IFDYYNNKCG (62 aa). 4 disulfide bridges follow: cysteine 31-cysteine 81, cysteine 35-cysteine 57, cysteine 43-cysteine 62, and cysteine 47-cysteine 64. Position 81 is a cysteine amide (cysteine 81).

As to expression, expressed by the venom gland.

It is found in the secreted. Its function is as follows. Inhibits the sodium (Nav) currents in an apparent irreversible manner. Produces small depolarization and induces repetitive firing in squid axons. Is specific for arthropods (crickets, triatomides, crabs and squids), but is non-toxic to mice. Shows antibacterial activity against both Gram-positive and Gram-negative bacteria. The protein is Ardiscretin of Tityus discrepans (Venezuelan scorpion).